Consider the following 393-residue polypeptide: Sialyltransferase-like protein 1 (393 aa).

Residues 1–8 (MKRPLRRP) lie on the Cytoplasmic side of the membrane. Residues 9–27 (FAVLLFVVLCAAASFPSVL) form a helical; Signal-anchor for type II membrane protein membrane-spanning segment. The Lumenal segment spans residues 28 to 393 (RRSVGPAPVL…IAVPPVVFYH (366 aa)). N-linked (GlcNAc...) asparagine glycosylation is found at Asn-49, Asn-212, and Asn-258.

The protein belongs to the glycosyltransferase 29 family.

Its subcellular location is the golgi apparatus membrane. Its function is as follows. Possesses sialyltransferase-like activity in vitro. Transfers sialic acid to the oligosaccharide Gal-beta-1,3-GalNAc and to glycoproteins such as asialofetuin, alpha-1-acid glycoprotein (NeuAc-alpha-2,3-Gal-beta-1,3-GalNAc-) and andasialo-alpha-1-acid glycoprotein. The transferred sialic acid is linked to galactose of Gal-beta-1,3-GalNAc through alpha-2,6-linkage. The polypeptide is Sialyltransferase-like protein 1 (Oryza sativa subsp. indica (Rice)).